Reading from the N-terminus, the 462-residue chain is A-type ATP synthase subunit B (462 aa).

This sequence belongs to the ATPase alpha/beta chains family. Has multiple subunits with at least A(3), B(3), C, D, E, F, H, I and proteolipid K(x).

The protein localises to the cell membrane. Component of the A-type ATP synthase that produces ATP from ADP in the presence of a proton gradient across the membrane. The B chain is a regulatory subunit. The polypeptide is A-type ATP synthase subunit B (Methanococcus vannielii (strain ATCC 35089 / DSM 1224 / JCM 13029 / OCM 148 / SB)).